Consider the following 415-residue polypeptide: Trehalose synthase (415 aa).

The protein belongs to the glycosyltransferase group 1 family. Glycosyltransferase 4 subfamily. Homodimer. Mg(2+) serves as cofactor.

It carries out the reaction an NDP-alpha-D-glucose + D-glucose = alpha,alpha-trehalose + a ribonucleoside 5'-diphosphate + H(+). In terms of biological role, synthesizes trehalose from ADP-, UDP- or GDP-glucose and glucose. The chain is Trehalose synthase from Pyrococcus horikoshii (strain ATCC 700860 / DSM 12428 / JCM 9974 / NBRC 100139 / OT-3).